The sequence spans 77 residues: Large ribosomal subunit protein eL20 (77 aa).

This sequence belongs to the eukaryotic ribosomal protein eL20 family. In terms of assembly, part of the 50S ribosomal subunit. Binds 23S rRNA.

The protein is Large ribosomal subunit protein eL20 of Pyrococcus furiosus (strain ATCC 43587 / DSM 3638 / JCM 8422 / Vc1).